A 498-amino-acid polypeptide reads, in one-letter code: UPF0371 protein cauri_2449 (498 aa).

Belongs to the UPF0371 family.

In Corynebacterium aurimucosum (strain ATCC 700975 / DSM 44827 / CIP 107346 / CN-1) (Corynebacterium nigricans), this protein is UPF0371 protein cauri_2449.